A 458-amino-acid chain; its full sequence is ATP synthase subunit beta (458 aa).

148–155 (GGAGVGKT) is an ATP binding site.

The protein belongs to the ATPase alpha/beta chains family. F-type ATPases have 2 components, CF(1) - the catalytic core - and CF(0) - the membrane proton channel. CF(1) has five subunits: alpha(3), beta(3), gamma(1), delta(1), epsilon(1). CF(0) has three main subunits: a(1), b(2) and c(9-12). The alpha and beta chains form an alternating ring which encloses part of the gamma chain. CF(1) is attached to CF(0) by a central stalk formed by the gamma and epsilon chains, while a peripheral stalk is formed by the delta and b chains.

The protein resides in the cell inner membrane. It catalyses the reaction ATP + H2O + 4 H(+)(in) = ADP + phosphate + 5 H(+)(out). In terms of biological role, produces ATP from ADP in the presence of a proton gradient across the membrane. The catalytic sites are hosted primarily by the beta subunits. In Pseudomonas putida (strain W619), this protein is ATP synthase subunit beta.